Consider the following 207-residue polypeptide: Large ribosomal subunit protein bL25 (207 aa).

A disordered region spans residues 182 to 207 (QDLGDESVQEEQAAESAEGESEGSED).

This sequence belongs to the bacterial ribosomal protein bL25 family. CTC subfamily. In terms of assembly, part of the 50S ribosomal subunit; part of the 5S rRNA/L5/L18/L25 subcomplex. Contacts the 5S rRNA. Binds to the 5S rRNA independently of L5 and L18.

Functionally, this is one of the proteins that binds to the 5S RNA in the ribosome where it forms part of the central protuberance. In Micrococcus luteus (strain ATCC 4698 / DSM 20030 / JCM 1464 / CCM 169 / CCUG 5858 / IAM 1056 / NBRC 3333 / NCIMB 9278 / NCTC 2665 / VKM Ac-2230) (Micrococcus lysodeikticus), this protein is Large ribosomal subunit protein bL25.